The chain runs to 2504 residues: Fatty acid synthase (2504 aa).

N-acetylmethionine is present on methionine 1. The Ketosynthase family 3 (KS3) domain maps to 1 to 406 (MEEVVIAGMS…GSNVHVILQP (406 aa)). An N6-acetyllysine modification is found at lysine 59. Serine 63 bears the Phosphoserine mark. Lysine 70 bears the N6-acetyllysine mark. Cysteine 161 acts as the For beta-ketoacyl synthase activity in catalysis. At serine 207 the chain carries Phosphoserine. The For beta-ketoacyl synthase activity role is filled by histidine 293. Lysine 298 carries the post-translational modification N6-acetyllysine. Residue histidine 331 is the For beta-ketoacyl synthase activity of the active site. Residues 429 to 817 (RTLEAVQDLL…INVNPNALFP (389 aa)) are acyl and malonyl transferases. The residue at position 528 (lysine 528) is an N6-acetyllysine. Catalysis depends on serine 581, which acts as the For malonyltransferase activity. Residues 647–648 (DT) and phenylalanine 671 each bind an acyl-CoA. Residue lysine 673 is modified to N6-acetyllysine. At serine 725 the chain carries Phosphoserine. Residue arginine 773 coordinates an acyl-CoA. Lysine 790 carries the N6-acetyllysine modification. The N-terminal hotdog fold stretch occupies residues 844 to 967 (VPVAEDFPNG…VYLWEDPNSK (124 aa)). In terms of domain architecture, PKS/mFAS DH spans 844–1104 (VPVAEDFPNG…ISRLQTTATS (261 aa)). Histidine 878 (proton acceptor; for dehydratase activity) is an active-site residue. The interval 982-1104 (SVSRLTQGEV…ISRLQTTATS (123 aa)) is C-terminal hotdog fold. At lysine 993 the chain carries N6-acetyllysine. Aspartate 1032 (proton donor; for dehydratase activity) is an active-site residue. Residues lysine 1071 and lysine 1276 each carry the N6-acetyllysine modification. The residue at position 1464 (cysteine 1464) is an S-nitrosocysteine. Residues serine 1577 and serine 1587 each carry the phosphoserine modification. Positions 1628 to 1856 (DVPSSWTLEE…VQVREEEPEA (229 aa)) are enoyl reductase. Residue 1664-1681 (VLIHSGSGGVGQAAISIA) participates in NADP(+) binding. Lysine 1697 bears the N6-(pyridoxal phosphate)lysine; alternate mark. Lysine 1697 is modified (N6-acetyllysine; alternate). N6-acetyllysine is present on residues lysine 1764 and lysine 1840. The segment at 1857–2111 (VLPGAQPTLI…FVLAEKKAVA (255 aa)) is beta-ketoacyl reductase. 1879 to 1894 (SYIITGGLGGFGLELA) provides a ligand contact to NADP(+). At lysine 1988 the chain carries N6-acetyllysine. Residue cysteine 2084 is modified to S-nitrosocysteine. The region spanning 2112–2192 (HGDGDTQRDL…EMSSKTDSAT (81 aa)) is the Carrier domain. Position 2150 is an O-(pantetheine 4'-phosphoryl)serine; alternate (serine 2150). Serine 2150 carries the phosphoserine; alternate modification. The disordered stretch occupies residues 2181–2205 (LQEMSSKTDSATDTTAPKSRSDTSL). The segment covering 2185–2198 (SSKTDSATDTTAPK) has biased composition (low complexity). A phosphoserine mark is found at serine 2190 and serine 2229. Positions 2201-2504 (SDTSLKQNQL…AEPRVSVREG (304 aa)) are thioesterase. The For thioesterase activity role is filled by serine 2301. Lysine 2384 carries the post-translational modification N6-acetyllysine. A Glycyl lysine isopeptide (Lys-Gly) (interchain with G-Cter in SUMO2) cross-link involves residue lysine 2442. Histidine 2474 functions as the For thioesterase activity in the catalytic mechanism.

In terms of assembly, homodimer which is arranged in a head to tail fashion. Interacts with CEACAM1; this interaction is insulin and phosphorylation-dependent; reduces fatty-acid synthase activity. In terms of processing, S-nitrosylation of Fatty acid synthase at cysteine residues Cys-1464 or Cys-2084 is important for the enzyme dimerization. In adipocytes, S-nitrosylation of Fatty acid synthase occurs under physiological conditions and gradually increases during adipogenesis.

The protein resides in the cytoplasm. It localises to the melanosome. It catalyses the reaction acetyl-CoA + n malonyl-CoA + 2n NADPH + 2n H(+) = a long-chain fatty acid + (n+1) CoA + n CO2 + 2n NADP(+).. The enzyme catalyses holo-[ACP] + acetyl-CoA = acetyl-[ACP] + CoA. It carries out the reaction holo-[ACP] + malonyl-CoA = malonyl-[ACP] + CoA. The catalysed reaction is a fatty acyl-[ACP] + malonyl-[ACP] + H(+) = a 3-oxoacyl-[ACP] + holo-[ACP] + CO2. It catalyses the reaction a (3R)-hydroxyacyl-[ACP] + NADP(+) = a 3-oxoacyl-[ACP] + NADPH + H(+). The enzyme catalyses a (3R)-hydroxyacyl-[ACP] = a (2E)-enoyl-[ACP] + H2O. It carries out the reaction a 2,3-saturated acyl-[ACP] + NADP(+) = a (2E)-enoyl-[ACP] + NADPH + H(+). The catalysed reaction is hexadecanoyl-[ACP] + H2O = hexadecanoate + holo-[ACP] + H(+). It catalyses the reaction acetyl-[ACP] + malonyl-[ACP] + H(+) = 3-oxobutanoyl-[ACP] + holo-[ACP] + CO2. The enzyme catalyses 3-oxobutanoyl-[ACP] + NADPH + H(+) = (3R)-hydroxybutanoyl-[ACP] + NADP(+). It carries out the reaction (3R)-hydroxybutanoyl-[ACP] = (2E)-butenoyl-[ACP] + H2O. The catalysed reaction is (2E)-butenoyl-[ACP] + NADPH + H(+) = butanoyl-[ACP] + NADP(+). It catalyses the reaction butanoyl-[ACP] + malonyl-[ACP] + H(+) = 3-oxohexanoyl-[ACP] + holo-[ACP] + CO2. The enzyme catalyses 3-oxohexanoyl-[ACP] + NADPH + H(+) = (3R)-hydroxyhexanoyl-[ACP] + NADP(+). It carries out the reaction (3R)-hydroxyhexanoyl-[ACP] = (2E)-hexenoyl-[ACP] + H2O. The catalysed reaction is (2E)-hexenoyl-[ACP] + NADPH + H(+) = hexanoyl-[ACP] + NADP(+). It catalyses the reaction hexanoyl-[ACP] + malonyl-[ACP] + H(+) = 3-oxooctanoyl-[ACP] + holo-[ACP] + CO2. The enzyme catalyses 3-oxooctanoyl-[ACP] + NADPH + H(+) = (3R)-hydroxyoctanoyl-[ACP] + NADP(+). It carries out the reaction (3R)-hydroxyoctanoyl-[ACP] = (2E)-octenoyl-[ACP] + H2O. The catalysed reaction is (2E)-octenoyl-[ACP] + NADPH + H(+) = octanoyl-[ACP] + NADP(+). It catalyses the reaction octanoyl-[ACP] + malonyl-[ACP] + H(+) = 3-oxodecanoyl-[ACP] + holo-[ACP] + CO2. The enzyme catalyses 3-oxodecanoyl-[ACP] + NADPH + H(+) = (3R)-hydroxydecanoyl-[ACP] + NADP(+). It carries out the reaction (3R)-hydroxydecanoyl-[ACP] = (2E)-decenoyl-[ACP] + H2O. The catalysed reaction is (2E)-decenoyl-[ACP] + NADPH + H(+) = decanoyl-[ACP] + NADP(+). It catalyses the reaction decanoyl-[ACP] + malonyl-[ACP] + H(+) = 3-oxododecanoyl-[ACP] + holo-[ACP] + CO2. The enzyme catalyses 3-oxododecanoyl-[ACP] + NADPH + H(+) = (3R)-hydroxydodecanoyl-[ACP] + NADP(+). It carries out the reaction (3R)-hydroxydodecanoyl-[ACP] = (2E)-dodecenoyl-[ACP] + H2O. The catalysed reaction is (2E)-dodecenoyl-[ACP] + NADPH + H(+) = dodecanoyl-[ACP] + NADP(+). It catalyses the reaction dodecanoyl-[ACP] + malonyl-[ACP] + H(+) = 3-oxotetradecanoyl-[ACP] + holo-[ACP] + CO2. The enzyme catalyses 3-oxotetradecanoyl-[ACP] + NADPH + H(+) = (3R)-hydroxytetradecanoyl-[ACP] + NADP(+). It carries out the reaction (3R)-hydroxytetradecanoyl-[ACP] = (2E)-tetradecenoyl-[ACP] + H2O. The catalysed reaction is (2E)-tetradecenoyl-[ACP] + NADPH + H(+) = tetradecanoyl-[ACP] + NADP(+). It catalyses the reaction tetradecanoyl-[ACP] + malonyl-[ACP] + H(+) = 3-oxohexadecanoyl-[ACP] + holo-[ACP] + CO2. The enzyme catalyses 3-oxohexadecanoyl-[ACP] + NADPH + H(+) = (3R)-hydroxyhexadecanoyl-[ACP] + NADP(+). It carries out the reaction (3R)-hydroxyhexadecanoyl-[ACP] = (2E)-hexadecenoyl-[ACP] + H2O. The catalysed reaction is (2E)-hexadecenoyl-[ACP] + NADPH + H(+) = hexadecanoyl-[ACP] + NADP(+). It catalyses the reaction hexadecanoyl-[ACP] + malonyl-[ACP] + H(+) = 3-oxooctadecanoyl-[ACP] + holo-[ACP] + CO2. The enzyme catalyses 3-oxooctadecanoyl-[ACP] + NADPH + H(+) = (3R)-hydroxyoctadecanoyl-[ACP] + NADP(+). It carries out the reaction (3R)-hydroxyoctadecanoyl-[ACP] = (2E)-octadecenoyl-[ACP] + H2O. The catalysed reaction is (2E)-octadecenoyl-[ACP] + NADPH + H(+) = octadecanoyl-[ACP] + NADP(+). It catalyses the reaction tetradecanoyl-[ACP] + H2O = tetradecanoate + holo-[ACP] + H(+). It participates in lipid metabolism; fatty acid biosynthesis. In terms of biological role, fatty acid synthetase is a multifunctional enzyme that catalyzes the de novo biosynthesis of long-chain saturated fatty acids starting from acetyl-CoA and malonyl-CoA in the presence of NADPH. This multifunctional protein contains 7 catalytic activities and a site for the binding of the prosthetic group 4'-phosphopantetheine of the acyl carrier protein ([ACP]) domain. This Mus musculus (Mouse) protein is Fatty acid synthase (Fasn).